The chain runs to 363 residues: Chorismate synthase (363 aa).

The segment at 44 to 63 is disordered; sequence DLDRRKPGTSRHTTQRQEPD. NADP(+) contacts are provided by Arg-48 and Arg-54. Residues 125–127, 237–238, Gly-277, 292–296, and Arg-318 contribute to the FMN site; these read RSS, NA, and KATSS.

This sequence belongs to the chorismate synthase family. Homotetramer. FMNH2 is required as a cofactor.

The enzyme catalyses 5-O-(1-carboxyvinyl)-3-phosphoshikimate = chorismate + phosphate. It participates in metabolic intermediate biosynthesis; chorismate biosynthesis; chorismate from D-erythrose 4-phosphate and phosphoenolpyruvate: step 7/7. Its function is as follows. Catalyzes the anti-1,4-elimination of the C-3 phosphate and the C-6 proR hydrogen from 5-enolpyruvylshikimate-3-phosphate (EPSP) to yield chorismate, which is the branch point compound that serves as the starting substrate for the three terminal pathways of aromatic amino acid biosynthesis. This reaction introduces a second double bond into the aromatic ring system. The protein is Chorismate synthase of Pseudomonas fluorescens (strain SBW25).